We begin with the raw amino-acid sequence, 312 residues long: uncharacterized protein (312 aa).

Helical transmembrane passes span 4–24 and 286–306; these read AIYLLILCIFGLFSVYFTYAE and YLLSFIGIIIGFGIIGLAIYL.

Its subcellular location is the cell membrane. This is an uncharacterized protein from Methanocaldococcus jannaschii (strain ATCC 43067 / DSM 2661 / JAL-1 / JCM 10045 / NBRC 100440) (Methanococcus jannaschii).